The chain runs to 489 residues: uncharacterized protein (489 aa).

11 helical membrane passes run 29 to 49 (FIASCILFCCPGIYLAVTGLG), 67 to 87 (LLYALFTVCGWAGGPILKYLG), 90 to 110 (WALALGATGYPIYIGGLWYFD), 119 to 139 (IFTGAYEGIAAGLLWASTAYI), 152 to 172 (FIATQWTILAFGSTVGSFIAF), 186 to 206 (AVYIIFIIIMACAVLLAILFI), 276 to 296 (LNNVLFWVIQFFVPYLFTLIL), 308 to 328 (IIGLTIQAVVIMATLSGELGW), 351 to 371 (GGALVLYLLMGIQYGSSIVSV), 397 to 417 (AAGMCVSFGIDAAGVSFLGQG), and 418 to 438 (IIYFIFLFVMCASQLIMTSIF).

Its subcellular location is the membrane. This is an uncharacterized protein from Schizosaccharomyces pombe (strain 972 / ATCC 24843) (Fission yeast).